The sequence spans 352 residues: Phosphoribosylformylglycinamidine cyclo-ligase (352 aa).

The protein belongs to the AIR synthase family.

It is found in the cytoplasm. It catalyses the reaction 2-formamido-N(1)-(5-O-phospho-beta-D-ribosyl)acetamidine + ATP = 5-amino-1-(5-phospho-beta-D-ribosyl)imidazole + ADP + phosphate + H(+). The protein operates within purine metabolism; IMP biosynthesis via de novo pathway; 5-amino-1-(5-phospho-D-ribosyl)imidazole from N(2)-formyl-N(1)-(5-phospho-D-ribosyl)glycinamide: step 2/2. In Stenotrophomonas maltophilia (strain R551-3), this protein is Phosphoribosylformylglycinamidine cyclo-ligase.